Reading from the N-terminus, the 462-residue chain is Cysteine--tRNA ligase (462 aa).

Position 24 (cysteine 24) interacts with Zn(2+). Positions 26–36 (PTVYDDAHLGH) match the 'HIGH' region motif. Positions 199, 224, and 228 each coordinate Zn(2+). Residues 256–260 (KMSKS) carry the 'KMSKS' region motif. Lysine 259 serves as a coordination point for ATP.

This sequence belongs to the class-I aminoacyl-tRNA synthetase family. Monomer. Requires Zn(2+) as cofactor.

Its subcellular location is the cytoplasm. The catalysed reaction is tRNA(Cys) + L-cysteine + ATP = L-cysteinyl-tRNA(Cys) + AMP + diphosphate. The protein is Cysteine--tRNA ligase of Campylobacter jejuni subsp. jejuni serotype O:6 (strain 81116 / NCTC 11828).